The chain runs to 199 residues: Imidazoleglycerol-phosphate dehydratase (199 aa).

Belongs to the imidazoleglycerol-phosphate dehydratase family.

It localises to the cytoplasm. It carries out the reaction D-erythro-1-(imidazol-4-yl)glycerol 3-phosphate = 3-(imidazol-4-yl)-2-oxopropyl phosphate + H2O. The protein operates within amino-acid biosynthesis; L-histidine biosynthesis; L-histidine from 5-phospho-alpha-D-ribose 1-diphosphate: step 6/9. The sequence is that of Imidazoleglycerol-phosphate dehydratase from Bifidobacterium longum (strain NCC 2705).